The primary structure comprises 282 residues: Chlorite dismutase (282 aa).

The signal sequence occupies residues 1–31 (MTNLSIHNFKLSLVAAVIGSAMVMTSSPVAA). Residue Glu104 coordinates Ca(2+). His204 lines the heme pocket. Arg217 (proton acceptor) is an active-site residue. Positions 226 and 265 each coordinate Ca(2+).

This sequence belongs to the chlorite dismutase family. Homopentamer. Heme b serves as cofactor.

The protein localises to the periplasm. It catalyses the reaction chloride + O2 = chlorite. In terms of biological role, catalyzes the heme-dependent decomposition of chlorite to O(2) and chloride with high efficiency and specificity. Used to detoxify chlorite, a by-product of the reduction of perchlorate, a primarily anthropogenic pollutant, in perchlorate-respiring bacteria. The sequence is that of Chlorite dismutase from Dechloromonas aromatica (strain RCB).